We begin with the raw amino-acid sequence, 390 residues long: Caveolae-associated protein 1 (390 aa).

Residue Met-1 is modified to N-acetylmethionine. Positions 1–40 (MEDPTLYIVERPLPGYPDAEAPEPSSAGAQAAEEPSGAGS) are disordered. Residues 1-98 (MEDPTLYIVE…IQGELSKLGK (98 aa)) are required for homotrimerization and for interaction with CAVIN2 and CAVIN3. Over residues 22 to 40 (PEPSSAGAQAAEEPSGAGS) the composition is skewed to low complexity. A phosphoserine mark is found at Ser-36, Ser-40, and Ser-46. The nuclear export signal stretch occupies residues 52 to 62 (VLVLSLLDKII). Residues 53–75 (LVLSLLDKIIGAVDQIQLTQAQL) are leucine-zipper 1. Residue Lys-116 forms a Glycyl lysine isopeptide (Lys-Gly) (interchain with G-Cter in SUMO2) linkage. Ser-118 carries the post-translational modification Phosphoserine. Residue Lys-122 forms a Glycyl lysine isopeptide (Lys-Gly) (interchain with G-Cter in SUMO2) linkage. The tract at residues 136–152 (KKLEVNEAELLRRRNFK) is nuclear localization signal. At Tyr-156 the chain carries Phosphotyrosine. Lys-161 participates in a covalent cross-link: Glycyl lysine isopeptide (Lys-Gly) (interchain with G-Cter in SUMO1); alternate. A Glycyl lysine isopeptide (Lys-Gly) (interchain with G-Cter in SUMO2); alternate cross-link involves residue Lys-161. Residue Lys-165 forms a Glycyl lysine isopeptide (Lys-Gly) (interchain with G-Cter in SUMO2) linkage. A leucine-zipper 2 region spans residues 166 to 186 (LSISKSLKESEALPEKEGEEL). Residues Ser-167 and Ser-169 each carry the phosphoserine modification. A Glycyl lysine isopeptide (Lys-Gly) (interchain with G-Cter in SUMO2) cross-link involves residue Lys-170. Phosphoserine is present on residues Ser-171 and Ser-175. Residues 172-181 (LKESEALPEK) are compositionally biased toward basic and acidic residues. The segment at 172–201 (LKESEALPEKEGEELGEGERPEEDAAALEL) is disordered. Positions 182-201 (EGEELGEGERPEEDAAALEL) are enriched in acidic residues. Residues 199–282 (LELSSDEAVE…RMNKLGTRLV (84 aa)) adopt a coiled-coil conformation. Residues Ser-202 and Ser-203 each carry the phosphoserine modification. The segment at 233-249 (KKAFSKEKMEKTKVRTR) is nuclear localization signal. A leucine-zipper 3 region spans residues 257–297 (LKTKENLEKTRHTLEKRMNKLGTRLVPAERREKLKTSRDKL). At Ser-300 the chain carries Phosphoserine. Thr-302 is subject to Phosphothreonine. Residue Tyr-308 is modified to Phosphotyrosine. Residue Lys-326 forms a Glycyl lysine isopeptide (Lys-Gly) (interchain with G-Cter in SUMO2) linkage. Residues 344–366 (VGADDDEGGAERGEAGDLRRGSS) are disordered. The span at 352 to 365 (GAERGEAGDLRRGS) shows a compositional bias: basic and acidic residues. Phosphoserine is present on residues Ser-365, Ser-366, Ser-379, Ser-387, and Ser-389.

Belongs to the CAVIN family. Component of the CAVIN complex composed of CAVIN1, CAVIN2, CAVIN3 and CAVIN4. Homotrimer. Interacts with TTF1. Interacts with RNA polymerase I subunit POLR1A/RPA1. Binds the 3' end of pre-rRNA. Interacts with transcription factor ZNF148. Interacts with LIPE in the adipocyte cytoplasm. Interacts with CAV1 and CAVIN3. Interacts with CAVIN2. Interacts with CAVIN4 and CAV3. In terms of processing, phosphorylated. Present in active and inactive forms. Changes in phosphorylation pattern may alter activity. Phosphorylation at Tyr-156 is essential for its functionin the regulation of ribosomal transcriptional activity. Post-translationally, five truncated forms are found in the caveolae. These are thought to be the result of proteolysis and may be phosphorylation-dependent. Monoubiquitinated.

It is found in the membrane. The protein resides in the caveola. Its subcellular location is the cell membrane. It localises to the microsome. The protein localises to the endoplasmic reticulum. It is found in the cytoplasm. The protein resides in the cytosol. Its subcellular location is the mitochondrion. It localises to the nucleus. In terms of biological role, plays an important role in caveolae formation and organization. Essential for the formation of caveolae in all tissues. Core component of the CAVIN complex which is essential for recruitment of the complex to the caveolae in presence of calveolin-1 (CAV1). Essential for normal oligomerization of CAV1. Promotes ribosomal transcriptional activity in response to metabolic challenges in the adipocytes and plays an important role in the formation of the ribosomal transcriptional loop. Dissociates transcription complexes paused by DNA-bound TTF1, thereby releasing both RNA polymerase I and pre-RNA from the template. The caveolae biogenesis pathway is required for the secretion of proteins such as GASK1A. The polypeptide is Caveolae-associated protein 1 (Homo sapiens (Human)).